We begin with the raw amino-acid sequence, 1010 residues long: Eukaryotic translation initiation factor 4E transporter (1010 aa).

The YXXXXLphi motif signature appears at 10–16 (YSKVDLL). Disordered stretches follow at residues 154–182 (GSNS…RKGS), 196–277 (PDHD…RLVE), 289–320 (YDSK…SKRG), 354–391 (NEER…SNDS), and 921–960 (QSNP…ERIS). Residues 201–211 (CMSSSPTFSTS) are compositionally biased toward polar residues. Over residues 227–247 (DNWDYKNEKTVEASIENEKET) the composition is skewed to basic and acidic residues. The segment covering 248 to 263 (SPNGSGSTSSLNQHNQ) has biased composition (polar residues). 2 stretches are compositionally biased toward basic and acidic residues: residues 354 to 364 (NEERSVTEDKN) and 372 to 384 (KNLD…DEAS). The span at 934–953 (SDSSDSGNVIKANSLTSPSY) shows a compositional bias: polar residues.

The protein belongs to the 4E-T/EIF4E-T family. In terms of assembly, interacts (via YXXXXLphi motif) with eIF4E1. Interacts with DDX6/me31B. Expressed in all larval and adult organs and tissues, with highest levels in the ovary.

The protein localises to the cytoplasm. It is found in the P-body. The protein resides in the nucleus. Functionally, eIF4E1-binding protein that regulates translation and stability of mRNAs in processing bodies (P-bodies). Probably plays a role in P-bodies to coordinate the storage of translationally inactive mRNAs in the cytoplasm and prevent their degradation. Acts as a binding platform for multiple RNA-binding proteins. Required for the formation of P-bodies. The polypeptide is Eukaryotic translation initiation factor 4E transporter (Drosophila melanogaster (Fruit fly)).